The following is a 158-amino-acid chain: SsrA-binding protein (158 aa).

Over residues 133-147 the composition is skewed to basic and acidic residues; sequence KRQALRERQDNREAQ. The interval 133–158 is disordered; it reads KRQALRERQDNREAQRAMASRKHLGE.

This sequence belongs to the SmpB family.

The protein resides in the cytoplasm. Required for rescue of stalled ribosomes mediated by trans-translation. Binds to transfer-messenger RNA (tmRNA), required for stable association of tmRNA with ribosomes. tmRNA and SmpB together mimic tRNA shape, replacing the anticodon stem-loop with SmpB. tmRNA is encoded by the ssrA gene; the 2 termini fold to resemble tRNA(Ala) and it encodes a 'tag peptide', a short internal open reading frame. During trans-translation Ala-aminoacylated tmRNA acts like a tRNA, entering the A-site of stalled ribosomes, displacing the stalled mRNA. The ribosome then switches to translate the ORF on the tmRNA; the nascent peptide is terminated with the 'tag peptide' encoded by the tmRNA and targeted for degradation. The ribosome is freed to recommence translation, which seems to be the essential function of trans-translation. The protein is SsrA-binding protein of Leifsonia xyli subsp. xyli (strain CTCB07).